Here is a 68-residue protein sequence, read N- to C-terminus: Small ribosomal subunit protein bS21 (68 aa).

Belongs to the bacterial ribosomal protein bS21 family.

This is Small ribosomal subunit protein bS21 from Paracoccus denitrificans (strain Pd 1222).